A 583-amino-acid polypeptide reads, in one-letter code: Putative amidase C869.01 (583 aa).

Positions 1–19 (MKLQLLFLTLAQLAKHGLA) are cleaved as a signal peptide. Catalysis depends on charge relay system residues Lys-141 and Ser-222. Ser-246 acts as the Acyl-ester intermediate in catalysis.

This sequence belongs to the amidase family.

It localises to the cytoplasm. The catalysed reaction is a monocarboxylic acid amide + H2O = a monocarboxylate + NH4(+). In Schizosaccharomyces pombe (strain 972 / ATCC 24843) (Fission yeast), this protein is Putative amidase C869.01.